We begin with the raw amino-acid sequence, 292 residues long: Elongation factor Ts (292 aa).

The interval 80-83 (TDFV) is involved in Mg(2+) ion dislocation from EF-Tu.

Belongs to the EF-Ts family.

It is found in the cytoplasm. Its function is as follows. Associates with the EF-Tu.GDP complex and induces the exchange of GDP to GTP. It remains bound to the aminoacyl-tRNA.EF-Tu.GTP complex up to the GTP hydrolysis stage on the ribosome. The polypeptide is Elongation factor Ts (Cupriavidus taiwanensis (strain DSM 17343 / BCRC 17206 / CCUG 44338 / CIP 107171 / LMG 19424 / R1) (Ralstonia taiwanensis (strain LMG 19424))).